Here is a 164-residue protein sequence, read N- to C-terminus: Protein SprT (164 aa).

Positions Y13 to V156 constitute a SprT-like domain. Residue H69 coordinates Zn(2+). The active site involves E70. Residue H73 participates in Zn(2+) binding.

Belongs to the SprT family. Requires Zn(2+) as cofactor.

It is found in the cytoplasm. This is Protein SprT from Pseudomonas syringae pv. syringae (strain B728a).